Here is a 285-residue protein sequence, read N- to C-terminus: MYFQEIIFTLNKYWAQKGCVILQPYDIEVGAGTFHTATFFRVLGPESWNTGYVQPCRRPTDGRYGENPNRLGQYYQYQVILKPSPENSQEVYIESLKALGIDPLKHDIRFVEDDWESPTLGAWGLGWEVWLDGMEITQFTYFQQVGGIDLKPVSVEITYGLERIAMYLQEVENVFDIKWNEKFTYGDIHKQPEIEFSYFNFDHSDPVIIKKHFDEYERESNRLRELGLVFPAYEFCLKCSHLFNLLDARGVLSVAERTNYIARVRTLAKACAESYLIKRYGVING.

The protein belongs to the class-II aminoacyl-tRNA synthetase family. In terms of assembly, tetramer of two alpha and two beta subunits.

It localises to the cytoplasm. The catalysed reaction is tRNA(Gly) + glycine + ATP = glycyl-tRNA(Gly) + AMP + diphosphate. This Thermodesulfovibrio yellowstonii (strain ATCC 51303 / DSM 11347 / YP87) protein is Glycine--tRNA ligase alpha subunit.